Reading from the N-terminus, the 515-residue chain is 2,3-bisphosphoglycerate-independent phosphoglycerate mutase (515 aa).

Mn(2+) contacts are provided by D14 and S63. S63 is an active-site residue. Substrate contacts are provided by residues H124, 154-155 (RD), R186, R192, 259-262 (RADR), and K334. The Mn(2+) site is built by D401, H405, D442, H443, and H460.

The protein belongs to the BPG-independent phosphoglycerate mutase family. Mg(2+) serves as cofactor. Mn(2+) is required as a cofactor.

It catalyses the reaction (2R)-2-phosphoglycerate = (2R)-3-phosphoglycerate. The protein operates within carbohydrate degradation; glycolysis; pyruvate from D-glyceraldehyde 3-phosphate: step 3/5. Its activity is regulated as follows. Activity is not affected by 2,3-bisphosphoglycerate. Its function is as follows. Catalyzes the interconversion of 2-phosphoglycerate and 3-phosphoglycerate. This is 2,3-bisphosphoglycerate-independent phosphoglycerate mutase from Onchocerca volvulus.